The primary structure comprises 281 residues: Probable endonuclease 4 (281 aa).

Positions 69, 109, 145, 179, 182, 216, 229, 231, and 261 each coordinate Zn(2+).

The protein belongs to the AP endonuclease 2 family. Zn(2+) serves as cofactor.

It carries out the reaction Endonucleolytic cleavage to 5'-phosphooligonucleotide end-products.. In terms of biological role, endonuclease IV plays a role in DNA repair. It cleaves phosphodiester bonds at apurinic or apyrimidinic (AP) sites, generating a 3'-hydroxyl group and a 5'-terminal sugar phosphate. The sequence is that of Probable endonuclease 4 from Yersinia enterocolitica serotype O:8 / biotype 1B (strain NCTC 13174 / 8081).